A 721-amino-acid chain; its full sequence is BBSome complex member bbs-7 (721 aa).

As to quaternary structure, part of BBSome complex, that contains at least bbs-1, bbs-2, bbs-4, bbs-5, osm-12, bbs-8/ttc-8 and bbs-9. Interacts with bbs-1. Expressed in ciliated cells including amphid and both inner and outer labial neurons of the head and in both phasmid neurons PHA and PHB in the tail at larval stages L1 and L2.

The protein resides in the cell projection. It localises to the cilium. Its subcellular location is the cytoplasm. The protein localises to the cytoskeleton. It is found in the cilium basal body. The protein resides in the cilium axoneme. In terms of biological role, component of the BBSome complex. The BBSome complex is thought to function as a coat complex required for sorting of specific membrane proteins to the primary cilia. The BBSome complex is required for ciliogenesis but is dispensable for centriolar satellite function. Required for proper BBSome complex assembly and its ciliary localization. Required for cilia biogenesis and both the assembly and movement of intraflagellar transport proteins along the ciliary axoneme. Plays a role in the removal of degraded mechanosensory receptors within the cilia. Plays a role in guanylyl cyclase localization in the ring-like structures at the base of the finger compartment in AFD sensory neurons. In ciliated sensory neurons, required for the sensation of nitric oxide and avoidance of NO-producing organisms like P.aeruginosa. The protein is BBSome complex member bbs-7 of Caenorhabditis elegans.